The primary structure comprises 507 residues: Fumarate hydratase, mitochondrial (507 aa).

Residues 1–41 (MNRAFCLLARSRRFPRVPSAGAVLSGEAATLPRCAPNVVRM) constitute a mitochondrion transit peptide. Residues lysine 58, lysine 63, and lysine 77 each carry the N6-acetyllysine; alternate modification. N6-succinyllysine; alternate occurs at positions 58, 63, and 77. Residue threonine 82 is modified to Phosphothreonine. At lysine 91 the chain carries N6-acetyllysine. An N6-acetyllysine; alternate mark is found at lysine 112 and lysine 119. N6-succinyllysine; alternate occurs at positions 112 and 119. Residues 142–144 (SGT), 173–176 (HPND), and 183–185 (SSN) each bind substrate. Residue lysine 210 is modified to N6-acetyllysine. Lysine 220 bears the N6-acetyllysine; alternate mark. Lysine 220 is subject to N6-succinyllysine; alternate. Threonine 231 provides a ligand contact to substrate. Catalysis depends on histidine 232, which acts as the Proton donor/acceptor. Threonine 233 is modified (phosphothreonine). The residue at position 289 (lysine 289) is an N6-acetyllysine; alternate. N6-succinyllysine; alternate is present on lysine 289. Serine 362 is an active-site residue. Substrate is bound by residues serine 363 and 368 to 370 (KVN). A Phosphoserine modification is found at serine 363. An N6-succinyllysine mark is found at lysine 464 and lysine 470. The residue at position 499 (lysine 499) is an N6-acetyllysine.

This sequence belongs to the class-II fumarase/aspartase family. Fumarase subfamily. As to quaternary structure, homotetramer. Interacts with H2AZ1. Post-translationally, phosphorylation at Thr-233 by PRKDC in response to DNA damage promotes translocation to the nucleus and recruitment to DNA double-strand breaks (DSBs).

It localises to the mitochondrion. The protein resides in the cytoplasm. The protein localises to the cytosol. It is found in the nucleus. Its subcellular location is the chromosome. It catalyses the reaction (S)-malate = fumarate + H2O. The protein operates within carbohydrate metabolism; tricarboxylic acid cycle; (S)-malate from fumarate: step 1/1. In terms of biological role, catalyzes the reversible stereospecific interconversion of fumarate to L-malate. Experiments in other species have demonstrated that specific isoforms of this protein act in defined pathways and favor one direction over the other. Catalyzes the hydration of fumarate to L-malate in the tricarboxylic acid (TCA) cycle to facilitate a transition step in the production of energy in the form of NADH. Its function is as follows. Catalyzes the dehydration of L-malate to fumarate. Fumarate metabolism in the cytosol plays a role during urea cycle and arginine metabolism; fumarate being a by-product of the urea cycle and amino-acid catabolism. Also plays a role in DNA repair by promoting non-homologous end-joining (NHEJ). In response to DNA damage and phosphorylation by PRKDC, translocates to the nucleus and accumulates at DNA double-strand breaks (DSBs): acts by catalyzing formation of fumarate, an inhibitor of KDM2B histone demethylase activity, resulting in enhanced dimethylation of histone H3 'Lys-36' (H3K36me2). The chain is Fumarate hydratase, mitochondrial from Rattus norvegicus (Rat).